A 337-amino-acid chain; its full sequence is MDLDVLNMFLVAGGTLLVPILAFVTSFLLWPAALIKIYYWYWRRALGMQVKFSSYGNYKFCYTSRGKPGNKASVLMLHGFSAHKDMWLSVVKFLPKNLHLVCVDMPGHEGTTRSALDDYSICGQVKRIHQFVESIGLNKRTFHLVGTSMGGNVAGVYAAQHPTDISSLTLICPAGLMYPTESKFLKHLKGLEKSGDDQRILLIPSTAGEMEDMLRLCSFVRFKIPQQVLQGLVDVRIPHNEFYRQLFMALVNEKSRHSLQENMNKIVAPTQIIWGKQDQVLDVSGAEVLAGSIRGCQVEILENCGHSVVMERPRKSAKLMTDFLSSLQSTENNKKHE.

Residues 1 to 19 (MDLDVLNMFLVAGGTLLVP) lie on the Extracellular side of the membrane. The chain crosses the membrane as a helical; Signal-anchor for type II membrane protein span at residues 20-42 (ILAFVTSFLLWPAALIKIYYWYW). At 43 to 337 (RRALGMQVKF…QSTENNKKHE (295 aa)) the chain is on the cytoplasmic side. Residues 73 to 313 (SVLMLHGFSA…CGHSVVMERP (241 aa)) form the AB hydrolase-1 domain. The active-site Nucleophile is Ser-148. Active-site charge relay system residues include Asp-278 and His-306.

The protein belongs to the AB hydrolase superfamily.

It localises to the late endosome membrane. Its subcellular location is the lysosome membrane. The protein resides in the mitochondrion membrane. It catalyses the reaction Hydrolyzes glycerol monoesters of long-chain fatty acids.. The enzyme catalyses 1-octanoylglycerol + H2O = octanoate + glycerol + H(+). It carries out the reaction 1-decanoylglycerol + H2O = decanoate + glycerol + H(+). The catalysed reaction is 1-dodecanoylglycerol + H2O = dodecanoate + glycerol + H(+). It catalyses the reaction 1-tetradecanoylglycerol + H2O = tetradecanoate + glycerol + H(+). The enzyme catalyses 2-hexadecanoylglycerol + H2O = glycerol + hexadecanoate + H(+). It carries out the reaction 2-(9Z-octadecenoyl)-glycerol + H2O = glycerol + (9Z)-octadecenoate + H(+). The catalysed reaction is 1-(9Z-octadecenoyl)-glycerol + H2O = glycerol + (9Z)-octadecenoate + H(+). It catalyses the reaction 2-(9Z,12Z-octadecadienoyl)-glycerol + H2O = (9Z,12Z)-octadecadienoate + glycerol + H(+). The enzyme catalyses 2-(5Z,8Z,11Z,14Z-eicosatetraenoyl)-glycerol + H2O = glycerol + (5Z,8Z,11Z,14Z)-eicosatetraenoate + H(+). It carries out the reaction 1-(5Z,8Z,11Z,14Z-eicosatetraenoyl)-glycerol + H2O = glycerol + (5Z,8Z,11Z,14Z)-eicosatetraenoate + H(+). The catalysed reaction is 1-(9Z,12Z-octadecadienoyl)-glycerol + H2O = (9Z,12Z)-octadecadienoate + glycerol + H(+). It catalyses the reaction 3-(9Z-octadecenoyl)-sn-glycero-1-phospho-(3'-(9Z-octadecenoyl)-1'-sn-glycerol) + H2O = 3-(9Z-octadecenoyl)-sn-glycero-1-phospho-(1'-sn-glycerol) + (9Z)-octadecenoate + H(+). The enzyme catalyses (S,S)-2-(9Z-octadecenoyl)-sn-glycero-1-phospho-(2'-(9Z-octadecenoyl)-1'-sn-glycerol) + H2O = (S,S)-2-(9Z-octadecenoyl)-sn-glycero-1-phospho-(1'-sn-glycerol) + (9Z)-octadecenoate + H(+). It carries out the reaction (R,R)-2-(9Z-octadecenoyl)-sn-glycero-3-phospho-(2'-(9Z-octadecenoyl)-3'-sn-glycerol) + H2O = (R,R)-2-(9Z-octadecenoyl)-sn-glycero-3-phospho-(3'-sn-glycerol) + (9Z)-octadecenoate + H(+). Lipase that preferentially hydrolysis medium-chain saturated monoacylglycerols including 2-arachidonoylglycerol. Through 2-arachidonoylglycerol degradation may regulate endocannabinoid signaling pathways. Also has a lysophosphatidyl lipase activity with a preference for lysophosphatidylglycerol among other lysophospholipids. Also able to degrade bis(monoacylglycero)phosphate (BMP) and constitutes the major enzyme for BMP catabolism. BMP, also known as lysobisphosphatidic acid, is enriched in late endosomes and lysosomes and plays a key role in the formation of intraluminal vesicles and in lipid sorting. In Xenopus laevis (African clawed frog), this protein is Monoacylglycerol lipase abhd6-A (abhd6-a).